The following is a 190-amino-acid chain: MLLSDRDIRAEFQAGRLGLDPFDDSLIQPSSVDVRLDNLFRVFNNTRYTHIDPAQRQDDLTSLVEPKEGEPFVLHPGEFVLGATLERCTLPDDLAGRLEGKSSLGRLGLLTHSTAGFIDPGFSGHITLELSNVANLPITLWPGMKIGQLCLLRLTSPAQHPYGSSQVGSKYQGQRGPTPSKSYQNFVKSN.

DCTP contacts are provided by residues 101–106, Asp-119, 127–129, Gln-148, Tyr-162, and Gln-174; these read KSSLGR and TLE. Glu-129 acts as the Proton donor/acceptor in catalysis. Residues 163 to 190 form a disordered region; it reads GSSQVGSKYQGQRGPTPSKSYQNFVKSN.

The protein belongs to the dCTP deaminase family. In terms of assembly, homotrimer.

The enzyme catalyses dCTP + 2 H2O = dUMP + NH4(+) + diphosphate. Its pathway is pyrimidine metabolism; dUMP biosynthesis; dUMP from dCTP: step 1/1. Functionally, bifunctional enzyme that catalyzes both the deamination of dCTP to dUTP and the hydrolysis of dUTP to dUMP without releasing the toxic dUTP intermediate. This Mycolicibacterium gilvum (strain PYR-GCK) (Mycobacterium gilvum (strain PYR-GCK)) protein is dCTP deaminase, dUMP-forming.